The primary structure comprises 97 residues: Putative pterin-4-alpha-carbinolamine dehydratase (97 aa).

The protein belongs to the pterin-4-alpha-carbinolamine dehydratase family.

The catalysed reaction is (4aS,6R)-4a-hydroxy-L-erythro-5,6,7,8-tetrahydrobiopterin = (6R)-L-erythro-6,7-dihydrobiopterin + H2O. This Christiangramia forsetii (strain DSM 17595 / CGMCC 1.15422 / KT0803) (Gramella forsetii) protein is Putative pterin-4-alpha-carbinolamine dehydratase.